The chain runs to 379 residues: Dual-specificity RNA methyltransferase RlmN (379 aa).

The active-site Proton acceptor is E95. The 245-residue stretch at 101 to 345 (EETRGTLCVS…TTVRKTRGDD (245 aa)) folds into the Radical SAM core domain. Cysteines 108 and 350 form a disulfide. 3 residues coordinate [4Fe-4S] cluster: C115, C119, and C122. Residues 176 to 177 (GE), S208, 230 to 232 (SLH), and N307 contribute to the S-adenosyl-L-methionine site. The active-site S-methylcysteine intermediate is C350.

The protein belongs to the radical SAM superfamily. RlmN family. [4Fe-4S] cluster is required as a cofactor.

The protein localises to the cytoplasm. It carries out the reaction adenosine(2503) in 23S rRNA + 2 reduced [2Fe-2S]-[ferredoxin] + 2 S-adenosyl-L-methionine = 2-methyladenosine(2503) in 23S rRNA + 5'-deoxyadenosine + L-methionine + 2 oxidized [2Fe-2S]-[ferredoxin] + S-adenosyl-L-homocysteine. The catalysed reaction is adenosine(37) in tRNA + 2 reduced [2Fe-2S]-[ferredoxin] + 2 S-adenosyl-L-methionine = 2-methyladenosine(37) in tRNA + 5'-deoxyadenosine + L-methionine + 2 oxidized [2Fe-2S]-[ferredoxin] + S-adenosyl-L-homocysteine. In terms of biological role, specifically methylates position 2 of adenine 2503 in 23S rRNA and position 2 of adenine 37 in tRNAs. m2A2503 modification seems to play a crucial role in the proofreading step occurring at the peptidyl transferase center and thus would serve to optimize ribosomal fidelity. This is Dual-specificity RNA methyltransferase RlmN from Burkholderia vietnamiensis (strain G4 / LMG 22486) (Burkholderia cepacia (strain R1808)).